A 141-amino-acid chain; its full sequence is Large ribosomal subunit protein uL11 (141 aa).

The protein belongs to the universal ribosomal protein uL11 family. Part of the ribosomal stalk of the 50S ribosomal subunit. Interacts with L10 and the large rRNA to form the base of the stalk. L10 forms an elongated spine to which L12 dimers bind in a sequential fashion forming a multimeric L10(L12)X complex. One or more lysine residues are methylated.

In terms of biological role, forms part of the ribosomal stalk which helps the ribosome interact with GTP-bound translation factors. The chain is Large ribosomal subunit protein uL11 from Bacillus cereus (strain ATCC 10987 / NRS 248).